We begin with the raw amino-acid sequence, 218 residues long: Pyridoxine/pyridoxamine 5'-phosphate oxidase (218 aa).

Residues 14-17 (RREY) and Lys72 contribute to the substrate site. FMN is bound by residues 67 to 72 (RIVLLK), 82 to 83 (YT), Arg88, Lys89, and Gln111. Tyr129, Arg133, and Ser137 together coordinate substrate. FMN is bound by residues 146–147 (QS) and Trp191. 197–199 (RLH) is a binding site for substrate. Arg201 contributes to the FMN binding site.

Belongs to the pyridoxamine 5'-phosphate oxidase family. Homodimer. Requires FMN as cofactor.

The catalysed reaction is pyridoxamine 5'-phosphate + O2 + H2O = pyridoxal 5'-phosphate + H2O2 + NH4(+). It catalyses the reaction pyridoxine 5'-phosphate + O2 = pyridoxal 5'-phosphate + H2O2. The protein operates within cofactor metabolism; pyridoxal 5'-phosphate salvage; pyridoxal 5'-phosphate from pyridoxamine 5'-phosphate: step 1/1. It functions in the pathway cofactor metabolism; pyridoxal 5'-phosphate salvage; pyridoxal 5'-phosphate from pyridoxine 5'-phosphate: step 1/1. Functionally, catalyzes the oxidation of either pyridoxine 5'-phosphate (PNP) or pyridoxamine 5'-phosphate (PMP) into pyridoxal 5'-phosphate (PLP). This Salmonella typhi protein is Pyridoxine/pyridoxamine 5'-phosphate oxidase.